Here is an 850-residue protein sequence, read N- to C-terminus: G-type lectin S-receptor-like serine/threonine-protein kinase CES101 (850 aa).

The N-terminal stretch at 1 to 22 is a signal peptide; sequence MWSNCIFLTLFTFYLFLGQSCC. The Extracellular segment spans residues 23–423; sequence QTDTLLQGQY…IKGSKLAATW (401 aa). One can recognise a Bulb-type lectin domain in the interval 24-144; sequence TDTLLQGQYL…DSDGSMKRTL (121 aa). N-linked (GlcNAc...) asparagine glycans are attached at residues Asn-55, Asn-118, Asn-194, and Asn-374. Residues 334-416 form the PAN domain; sequence CSRFGYTFRE…PRTIYIRIKG (83 aa). Disulfide bonds link Cys-367–Cys-390 and Cys-371–Cys-377. A helical transmembrane segment spans residues 424 to 444; it reads LVVVASLFLIIPVTWLIIYLV. The Cytoplasmic portion of the chain corresponds to 445 to 850; it reads LRKFKIKGTN…RVTITVMEAR (406 aa). The 290-residue stretch at 527–816 folds into the Protein kinase domain; the sequence is FSDANKLGEG…ALSLPKEPAF (290 aa). Residues 533–541 and Lys-555 each bind ATP; that span reads LGEGGFGPV. Ser-561 carries the post-translational modification Phosphoserine. The segment at 616–633 is caM-binding; it reads LRKIVLDWKLRFRIMEGI. The active-site Proton acceptor is the Asp-652. Phosphoserine is present on Ser-669. Thr-686 is modified (phosphothreonine). Ser-730 and Ser-838 each carry phosphoserine. Thr-845 carries the phosphothreonine modification.

This sequence belongs to the protein kinase superfamily. Ser/Thr protein kinase family. Mostly expressed in leaves, and, to a lower extent, in roots and flowers.

Its subcellular location is the cell membrane. The enzyme catalyses L-seryl-[protein] + ATP = O-phospho-L-seryl-[protein] + ADP + H(+). It carries out the reaction L-threonyl-[protein] + ATP = O-phospho-L-threonyl-[protein] + ADP + H(+). Functionally, promotes the expression of genes involved in photosynthesis at least in dedifferentiated calli. The sequence is that of G-type lectin S-receptor-like serine/threonine-protein kinase CES101 (CES101) from Arabidopsis thaliana (Mouse-ear cress).